Reading from the N-terminus, the 110-residue chain is Large ribosomal subunit protein uL22 (110 aa).

Belongs to the universal ribosomal protein uL22 family. Part of the 50S ribosomal subunit.

Functionally, this protein binds specifically to 23S rRNA; its binding is stimulated by other ribosomal proteins, e.g. L4, L17, and L20. It is important during the early stages of 50S assembly. It makes multiple contacts with different domains of the 23S rRNA in the assembled 50S subunit and ribosome. The globular domain of the protein is located near the polypeptide exit tunnel on the outside of the subunit, while an extended beta-hairpin is found that lines the wall of the exit tunnel in the center of the 70S ribosome. In Klebsiella pneumoniae (strain 342), this protein is Large ribosomal subunit protein uL22.